A 378-amino-acid polypeptide reads, in one-letter code: tRNA N(3)-cytidine methyltransferase METTL2 (378 aa).

S-adenosyl-L-methionine-binding residues include Trp78, Tyr82, Gly188, Asp213, Asp239, Leu240, and Ile260.

Belongs to the methyltransferase superfamily. METL family. In terms of assembly, monomer. Interacts with DALRD3.

Its subcellular location is the cytoplasm. It carries out the reaction cytidine(32) in tRNA(Thr) + S-adenosyl-L-methionine = N(3)-methylcytidine(32) in tRNA(Thr) + S-adenosyl-L-homocysteine + H(+). It catalyses the reaction cytidine(32) in tRNA(Arg)(CCU) + S-adenosyl-L-methionine = N(3)-methylcytidine(32) in tRNA(Arg)(CCU) + S-adenosyl-L-homocysteine + H(+). Functionally, S-adenosyl-L-methionine-dependent methyltransferase that mediates N(3)-methylcytidine modification of residue 32 of the tRNA anticodon loop of tRNA(Thr)(UGU) and tRNA(Arg)(CCU). N(3)-methylcytidine methylation by METTL2 requires the N6-threonylcarbamoylation of tRNA (t6A37) by the EKC/KEOPS complex as prerequisite. The chain is tRNA N(3)-cytidine methyltransferase METTL2 (METTL2) from Bos taurus (Bovine).